Reading from the N-terminus, the 210-residue chain is uncharacterized protein (210 aa).

The signal sequence occupies residues 1 to 17; the sequence is MKRTAVSLCLLTGLLSG. The N-palmitoyl cysteine moiety is linked to residue Cys-18. Cys-18 carries the S-diacylglycerol cysteine lipid modification. A compositionally biased stretch (polar residues) spans 176–195; that stretch reads EMKTSPQGSPVSENENANGE. A disordered region spans residues 176-210; it reads EMKTSPQGSPVSENENANGETRQDMKIDRNDKNAR. Positions 196–210 are enriched in basic and acidic residues; that stretch reads TRQDMKIDRNDKNAR.

The protein localises to the cell membrane. This is an uncharacterized protein from Bacillus subtilis (strain 168).